The sequence spans 208 residues: Pyridoxine/pyridoxamine 5'-phosphate oxidase (208 aa).

FMN is bound by residues 55-60 (RMVLLK), 70-71 (YT), lysine 76, lysine 77, and glutamine 99. Lysine 60 provides a ligand contact to substrate. Substrate is bound by residues tyrosine 117, arginine 121, and serine 125. Residues 134–135 (QS) and tryptophan 179 each bind FMN. Substrate is bound at residue 185-187 (RLH). An FMN-binding site is contributed by arginine 189.

Belongs to the pyridoxamine 5'-phosphate oxidase family. As to quaternary structure, homodimer. The cofactor is FMN.

The catalysed reaction is pyridoxamine 5'-phosphate + O2 + H2O = pyridoxal 5'-phosphate + H2O2 + NH4(+). It carries out the reaction pyridoxine 5'-phosphate + O2 = pyridoxal 5'-phosphate + H2O2. Its pathway is cofactor metabolism; pyridoxal 5'-phosphate salvage; pyridoxal 5'-phosphate from pyridoxamine 5'-phosphate: step 1/1. The protein operates within cofactor metabolism; pyridoxal 5'-phosphate salvage; pyridoxal 5'-phosphate from pyridoxine 5'-phosphate: step 1/1. Its function is as follows. Catalyzes the oxidation of either pyridoxine 5'-phosphate (PNP) or pyridoxamine 5'-phosphate (PMP) into pyridoxal 5'-phosphate (PLP). This chain is Pyridoxine/pyridoxamine 5'-phosphate oxidase, found in Brucella ovis (strain ATCC 25840 / 63/290 / NCTC 10512).